The chain runs to 97 residues: Small nuclear ribonucleoprotein Sm D3 (97 aa).

The 73-residue stretch at 3–75 (LCIKLLHETQ…IRFLIVPDML (73 aa)) folds into the Sm domain.

It belongs to the snRNP core protein family. Belongs to the 40S cdc5-associated complex (or cwf complex), a spliceosome sub-complex reminiscent of a late-stage spliceosome composed of the U2, U5 and U6 snRNAs and at least brr2, cdc5, cwf2/prp3, cwf3/syf1, cwf4/syf3, cwf5/ecm2, spp42/cwf6, cwf7/spf27, cwf8, cwf9, cwf10, cwf11, cwf12, prp45/cwf13, cwf14, cwf15, cwf16, cwf17, cwf18, cwf19, cwf20, cwf21, cwf22, cwf23, cwf24, cwf25, cwf26, cyp7/cwf27, cwf28, cwf29/ist3, lea1, msl1, prp5/cwf1, prp10, prp12/sap130, prp17, prp22, sap61, sap62, sap114, sap145, slu7, smb1, smd1, smd3, smf1, smg1 and syf2. Interacts with saf5; the interaction is direct.

Its subcellular location is the nucleus. The protein localises to the cytoplasm. It localises to the cytosol. Functionally, plays a role in pre-mRNA splicing as a core component of the spliceosomal U1, U2, U4 and U5 small nuclear ribonucleoproteins (snRNPs), the building blocks of the spliceosome. This Schizosaccharomyces pombe (strain 972 / ATCC 24843) (Fission yeast) protein is Small nuclear ribonucleoprotein Sm D3 (smd3).